A 975-amino-acid chain; its full sequence is Glycine dehydrogenase (decarboxylating) (975 aa).

Lys723 bears the N6-(pyridoxal phosphate)lysine mark.

Belongs to the GcvP family. As to quaternary structure, the glycine cleavage system is composed of four proteins: P, T, L and H. Pyridoxal 5'-phosphate is required as a cofactor.

The enzyme catalyses N(6)-[(R)-lipoyl]-L-lysyl-[glycine-cleavage complex H protein] + glycine + H(+) = N(6)-[(R)-S(8)-aminomethyldihydrolipoyl]-L-lysyl-[glycine-cleavage complex H protein] + CO2. Its function is as follows. The glycine cleavage system catalyzes the degradation of glycine. The P protein binds the alpha-amino group of glycine through its pyridoxal phosphate cofactor; CO(2) is released and the remaining methylamine moiety is then transferred to the lipoamide cofactor of the H protein. The sequence is that of Glycine dehydrogenase (decarboxylating) from Burkholderia lata (strain ATCC 17760 / DSM 23089 / LMG 22485 / NCIMB 9086 / R18194 / 383).